We begin with the raw amino-acid sequence, 187 residues long: Crossover junction endodeoxyribonuclease RuvC (187 aa).

Catalysis depends on residues Asp7, Glu67, and Asp140. Mg(2+) is bound by residues Asp7, Glu67, and Asp140.

The protein belongs to the RuvC family. As to quaternary structure, homodimer which binds Holliday junction (HJ) DNA. The HJ becomes 2-fold symmetrical on binding to RuvC with unstacked arms; it has a different conformation from HJ DNA in complex with RuvA. In the full resolvosome a probable DNA-RuvA(4)-RuvB(12)-RuvC(2) complex forms which resolves the HJ. It depends on Mg(2+) as a cofactor.

The protein localises to the cytoplasm. It carries out the reaction Endonucleolytic cleavage at a junction such as a reciprocal single-stranded crossover between two homologous DNA duplexes (Holliday junction).. Functionally, the RuvA-RuvB-RuvC complex processes Holliday junction (HJ) DNA during genetic recombination and DNA repair. Endonuclease that resolves HJ intermediates. Cleaves cruciform DNA by making single-stranded nicks across the HJ at symmetrical positions within the homologous arms, yielding a 5'-phosphate and a 3'-hydroxyl group; requires a central core of homology in the junction. The consensus cleavage sequence is 5'-(A/T)TT(C/G)-3'. Cleavage occurs on the 3'-side of the TT dinucleotide at the point of strand exchange. HJ branch migration catalyzed by RuvA-RuvB allows RuvC to scan DNA until it finds its consensus sequence, where it cleaves and resolves the cruciform DNA. This chain is Crossover junction endodeoxyribonuclease RuvC, found in Chlorobaculum parvum (strain DSM 263 / NCIMB 8327) (Chlorobium vibrioforme subsp. thiosulfatophilum).